Reading from the N-terminus, the 1714-residue chain is Intersectin-1 (1714 aa).

The 89-residue stretch at 21-109 (ERAKHDQQFL…PVMKQQPVAI (89 aa)) folds into the EH 1 domain. Residues 53 to 88 (LPQPVLAQIWALADMNNDGRMDQVEFSIAMKLIKLK) form the EF-hand 1 domain. The Ca(2+) site is built by aspartate 66, asparagine 68, aspartate 70, arginine 72, and glutamate 77. A Phosphoserine modification is found at serine 203. An EH 2 domain is found at 221–310 (SRLKYRQLFN…PEYIPPSFRR (90 aa)). Residues 254 to 289 (LPQAQLASIWNLSDIDQDGKLTAEEFILAMHLIDVA) form the EF-hand 2 domain. Aspartate 267, aspartate 269, aspartate 271, lysine 273, and glutamate 278 together coordinate Ca(2+). A compositionally biased stretch (low complexity) spans 310–325 (RVRSGSGMSVISSSSV). 2 disordered regions span residues 310-356 (RVRS…KREN) and 614-706 (SKQQ…QSRL). A phosphoserine mark is found at serine 318, serine 334, and serine 335. Residues 326-702 (DQRLPEEPSS…ERAKPEMQDK (377 aa)) are KLERQ. 2 stretches are compositionally biased toward basic and acidic residues: residues 340 to 356 (QPEKKLPVTFEDKKREN) and 622 to 706 (RSLE…QSRL). The stretch at 354–658 (RENFERGSVE…QRRVQERDKQ (305 aa)) forms a coiled coil. Serine 685 is subject to Phosphoserine. An SH3 1 domain is found at 738 to 799 (VKVVYYRALY…PANYAEKIPE (62 aa)). A disordered region spans residues 827 to 863 (APLPVTSSEPSTTPNNWADFSSTWPSSSNEKPETDNW). Residues 831–855 (VTSSEPSTTPNNWADFSSTWPSSSN) show a composition bias toward polar residues. At threonine 890 the chain carries Phosphothreonine. 3 positions are modified to phosphoserine: serine 894, serine 895, and serine 897. Positions 906-964 (VEGLQAQALYPWRAKKDNHLNFNKSDVITVLEQQDMWWFGEVQGQKGWFPKSYVKLISG) constitute an SH3 2 domain. A Phosphoserine modification is found at serine 971. Threonine 977 carries the post-translational modification Phosphothreonine. A phosphoserine mark is found at serine 979 and serine 988. SH3 domains are found at residues 995–1053 (IPGE…LKDS) and 1067–1131 (KKPE…LLSP). The tract at residues 1067–1131 (KKPEIAQVIA…PANYVKLLSP (65 aa)) is required for interaction with FCHSD2. Residues 1097-1120 (RKKNPGGWWEGELQARGKKRQIGW) carry the Bipartite nuclear localization signal; in isoform 2 motif. Position 1130 is a phosphoserine (serine 1130). Threonine 1137 is modified (phosphothreonine). The region spanning 1148–1207 (PAVCQVIGMYDYTAQNDDELAFSKGQIINVLNKEDPDWWKGEVSGQVGLFPSNYVKLTTD) is the SH3 5 domain. The 187-residue stretch at 1230–1416 (KRQGYIHELI…EELCSQVNEG (187 aa)) folds into the DH domain. In terms of domain architecture, PH spans 1455 to 1564 (KFLHSGKLYK…WVQKIKAASE (110 aa)). One can recognise a C2 domain in the interval 1572–1688 (KKREKAYLVR…KKDQGSKGPV (117 aa)). At serine 1638 the chain carries Phosphoserine. Aspartate 1660, serine 1663, and aspartate 1666 together coordinate Ca(2+).

As to quaternary structure, interacts (via DH domain) with CDC42. Interacts (via SH3 domain 1) with WASL. Interacts with dynamin, SNAP25 and SNAP23. Interacts with clathrin-associated proteins and other components of the endocytic machinery, such as SPIN90, EPS15, EPN1, EPN2, STON2, FCHO1, FCHO2 and DAB2. Interacts (via SH3 domains) with REPS1 and SGIP1. Interacts with ARHGAP31. Interacts with ADAM15. Interacts with PRRT2. Interacts (via SH3 domain 4) with FCHSD2 (via SH3 domain 2). Interacts (via SH3 domain 1) with DENND2B. Interacts (via SH3 domains) with CBL. Isoform 2: Interacts with CBL and DNM1. Isoform 2: Interacts with LMNA. Isoform 2: Interacts with importin subunit KPNA1; this is likely to mediate its import into the nucleus. Interacts with DNM2. Ca(2+) is required as a cofactor. Detected in brain, adrenal gland and heart. Detected in neurons at the calyx of Held (at protein level). Isoform 1: Primarily detected in brain neurons. Isoform 2: Primarily detected in glia (at protein level). Widely expressed. Expressed at high levels in brain, heart and skeletal muscle.

It localises to the endomembrane system. The protein localises to the synapse. It is found in the synaptosome. Its subcellular location is the cell projection. The protein resides in the lamellipodium. It localises to the cell membrane. The protein localises to the membrane. It is found in the clathrin-coated pit. Its subcellular location is the recycling endosome. The protein resides in the endosome. It localises to the cytoplasmic vesicle. The protein localises to the cytoplasm. It is found in the nucleus envelope. Functionally, adapter protein that provides a link between the endocytic membrane traffic and the actin assembly machinery. Acts as a guanine nucleotide exchange factor (GEF) for CDC42, and thereby stimulates actin nucleation mediated by WASL and the ARP2/3 complex. Plays a role in the assembly and maturation of clathrin-coated vesicles. Recruits FCHSD2 to clathrin-coated pits. Involved in endocytosis of activated EGFR, and probably also other growth factor receptors. Involved in endocytosis of integrin beta-1 (ITGB1) and transferrin receptor (TFR); internalization of ITGB1 as DAB2-dependent cargo but not TFR may involve association with DAB2. Promotes ubiquitination and subsequent degradation of EGFR, and thereby contributes to the down-regulation of EGFR-dependent signaling pathways. In chromaffin cells, required for normal exocytosis of catecholamines. Required for rapid replenishment of release-ready synaptic vesicles at presynaptic active zones. Inhibits ARHGAP31 activity toward RAC1. Plays a role in synaptic vesicle endocytosis in brain neurons. In Mus musculus (Mouse), this protein is Intersectin-1.